The chain runs to 224 residues: Protein GrpE (224 aa).

2 stretches are compositionally biased toward polar residues: residues Met1–Ser16 and Glu209–Ala224. Disordered stretches follow at residues Met1–Val35 and Ser203–Ala224.

The protein belongs to the GrpE family. Homodimer.

It localises to the cytoplasm. Participates actively in the response to hyperosmotic and heat shock by preventing the aggregation of stress-denatured proteins, in association with DnaK and GrpE. It is the nucleotide exchange factor for DnaK and may function as a thermosensor. Unfolded proteins bind initially to DnaJ; upon interaction with the DnaJ-bound protein, DnaK hydrolyzes its bound ATP, resulting in the formation of a stable complex. GrpE releases ADP from DnaK; ATP binding to DnaK triggers the release of the substrate protein, thus completing the reaction cycle. Several rounds of ATP-dependent interactions between DnaJ, DnaK and GrpE are required for fully efficient folding. This chain is Protein GrpE, found in Synechococcus sp. (strain CC9902).